Reading from the N-terminus, the 286-residue chain is tRNA (guanine-N(7)-)-methyltransferase (286 aa).

S-adenosyl-L-methionine-binding positions include G103, 126 to 127 (EI), 161 to 162 (NA), and C181. D184 is a catalytic residue. 259–261 (TEE) lines the S-adenosyl-L-methionine pocket.

This sequence belongs to the class I-like SAM-binding methyltransferase superfamily. TrmB family. As to quaternary structure, forms a complex with TRM82.

The protein resides in the nucleus. It catalyses the reaction guanosine(46) in tRNA + S-adenosyl-L-methionine = N(7)-methylguanosine(46) in tRNA + S-adenosyl-L-homocysteine. It functions in the pathway tRNA modification; N(7)-methylguanine-tRNA biosynthesis. Functionally, catalyzes the formation of N(7)-methylguanine at position 46 (m7G46) in tRNA. This Vanderwaltozyma polyspora (strain ATCC 22028 / DSM 70294 / BCRC 21397 / CBS 2163 / NBRC 10782 / NRRL Y-8283 / UCD 57-17) (Kluyveromyces polysporus) protein is tRNA (guanine-N(7)-)-methyltransferase.